We begin with the raw amino-acid sequence, 82 residues long: Sec-independent protein translocase protein TatA (82 aa).

Residues 1–21 (MGGISIWQLLIIAVIIVLLFG) traverse the membrane as a helical segment. The tract at residues 48–82 (PAKEAKKDADFVPQNLEKKEAETVEKQKQNDKEQA) is disordered.

Belongs to the TatA/E family. The Tat system comprises two distinct complexes: a TatABC complex, containing multiple copies of TatA, TatB and TatC subunits, and a separate TatA complex, containing only TatA subunits. Substrates initially bind to the TatABC complex, which probably triggers association of the separate TatA complex to form the active translocon.

It localises to the cell inner membrane. In terms of biological role, part of the twin-arginine translocation (Tat) system that transports large folded proteins containing a characteristic twin-arginine motif in their signal peptide across membranes. TatA could form the protein-conducting channel of the Tat system. The protein is Sec-independent protein translocase protein TatA of Aliivibrio fischeri (strain ATCC 700601 / ES114) (Vibrio fischeri).